A 231-amino-acid polypeptide reads, in one-letter code: Biosynthetic peptidoglycan transglycosylase (231 aa).

A helical membrane pass occupies residues 12 to 34 (AAVLAGLALLLVALAVSYRWVPP).

Belongs to the glycosyltransferase 51 family.

The protein localises to the cell inner membrane. It catalyses the reaction [GlcNAc-(1-&gt;4)-Mur2Ac(oyl-L-Ala-gamma-D-Glu-L-Lys-D-Ala-D-Ala)](n)-di-trans,octa-cis-undecaprenyl diphosphate + beta-D-GlcNAc-(1-&gt;4)-Mur2Ac(oyl-L-Ala-gamma-D-Glu-L-Lys-D-Ala-D-Ala)-di-trans,octa-cis-undecaprenyl diphosphate = [GlcNAc-(1-&gt;4)-Mur2Ac(oyl-L-Ala-gamma-D-Glu-L-Lys-D-Ala-D-Ala)](n+1)-di-trans,octa-cis-undecaprenyl diphosphate + di-trans,octa-cis-undecaprenyl diphosphate + H(+). Its pathway is cell wall biogenesis; peptidoglycan biosynthesis. Functionally, peptidoglycan polymerase that catalyzes glycan chain elongation from lipid-linked precursors. The chain is Biosynthetic peptidoglycan transglycosylase from Rhodospirillum centenum (strain ATCC 51521 / SW).